The primary structure comprises 373 residues: Partitioning protein REP1 (373 aa).

Residues 1-76 (MNGERLLACI…EKELDWPDPA (76 aa)) are interaction with REP2. The interval 1–129 (MNGERLLACI…LNRRGKGIRR (129 aa)) is interaction with REP2 and self-association. The nuclear localization stretch occupies residues 349–373 (FEEHWKPVDVEVEFRCKFKERKVDG).

In terms of assembly, interacts with REP2.

Its subcellular location is the nucleus. Its function is as follows. Part of the plasmid partitioning system, which ensures the equal distribution of replicated plasmid molecules to daughter cells. The plasmids exist as well-organized plasmid foci within the nucleus that stay together throughout the cell-cycle and act as entity during segregation, effetively reducing copy number to one. Plasmid partitioning requires the proteins REP1, REP2, and a cis-acting locus STB (REP3). REP1-REP2 stably associate with CSE4-containing chromatin at STB during S-phase, marking the locus with a centromeric tag, and thereby probably catching mitotic spindle microtubules to the plasmid cluster and coupling plasmid segregation to chromosome segregation. REP1-REP2 are required to recruit the cohesin complex to the STB locus for pairing of the replicated plasmid cluster, a prerequisite for successful plasmid segregation. REP1-REP2 also negatively regulate expression of site-specific recombinase FLP and of RAF1. This Saccharomyces cerevisiae (strain ATCC 204508 / S288c) (Baker's yeast) protein is Partitioning protein REP1 (REP1).